Consider the following 443-residue polypeptide: MTRKYFGTDGIRGTVGQAPITPDFVLRLAHAVGRVLKKSEARPTVLIGKDTRISGYMLESALESGFNSAGVDVVLLGPLPTPGVAYLTRAQRASLGVVISASHNPFADNGIKFFSAQGSKLPDVWEHDVEAALDEPPVWADSASLGKTRRLDDAAGRYIEFCKSTFANDLTLKGLKIVVDAAHGAAYQVAPKVFHELGAEVVAIGCSPDGLNINHEVGATHPQALIEAVKAHQADFGVALDGDADRLQLVDHAGRLYNGDELLYLLVDERLGRDEPVPGVVGTLMTNMAVEVALRARGVQFVRAKVGDRYVLEELEKHKWLLGGEGSGHLLALDKHTTGDGLISALQVLQACVRSGKKLAELLAEVTLFPQTLINVRLQPGQDWQVSANLASESRAVETELGAAGRLLIRASGTEPLVRVMVEARDAVQARACAERIANTLSV.

The active-site Phosphoserine intermediate is the S102. Mg(2+) is bound by residues S102, D241, D243, and D245. A Phosphoserine modification is found at S102.

Belongs to the phosphohexose mutase family. Requires Mg(2+) as cofactor. Post-translationally, activated by phosphorylation.

It catalyses the reaction alpha-D-glucosamine 1-phosphate = D-glucosamine 6-phosphate. Its function is as follows. Catalyzes the conversion of glucosamine-6-phosphate to glucosamine-1-phosphate. This is Phosphoglucosamine mutase from Albidiferax ferrireducens (strain ATCC BAA-621 / DSM 15236 / T118) (Rhodoferax ferrireducens).